A 272-amino-acid polypeptide reads, in one-letter code: Soluble interferon gamma receptor OPG193 (272 aa).

The first 13 residues, 1–13 (MRYIIILAVLFIN), serve as a signal peptide directing secretion. N-linked (GlcNAc...) asparagine; by host glycosylation is found at Asn-42, Asn-150, and Asn-267.

It belongs to the type II cytokine receptor family. Homodimer. Interacts with host IFNG.

It is found in the secreted. Its function is as follows. Counteracts the antiviral effects of host IFN-gamma. Acts as a soluble IFN-gamma receptor and thus inhibits the interaction between host IFN-gamma and its receptor. The sequence is that of Soluble interferon gamma receptor OPG193 (OPG193) from Homo sapiens (Human).